The sequence spans 438 residues: MLDILLLRKDPASAIARLETRQKPQPFLNLSAFQALEAERKTLQTRTEELQSRRNQLSRQIGISLGQGDPGSADTARAQVAASKLELAQSAARLEQIQAELQTMLEAVPNLPHDSVPVGADASGNIELRRWGQPASPAFALKDHVDIGRPLGLDLDLGVKLSGARFAVMKGQIARLHRALAQFMLDVQTGEHGYTECYVPYAVNAESLKGTGQLPKFESDLFSTKKGGQDGEPVPDNTALYLIPTSEVPLTNFVRGLVLTEAELPIRLTAHTPCFRSEAGSYGRDTRGMIRQHQFDKVEMVQIVHPATSYQALEEMTGHAEALLQKLGLPYRVMSLCTGDMGFGAAKTYDLEVWLPAQNSYREISSVSNCEAFQARRLQARFKNAQGKNEPVHTLNGSGLAVGRTLVALLENYQQADGSVTIPPALRPYMAGIAALRP.

245–247 (TSE) is an L-serine binding site. 276–278 (RSE) serves as a coordination point for ATP. Glutamate 299 is a binding site for L-serine. 363–366 (EISS) is an ATP binding site. Serine 398 is a binding site for L-serine.

This sequence belongs to the class-II aminoacyl-tRNA synthetase family. Type-1 seryl-tRNA synthetase subfamily. Homodimer. The tRNA molecule binds across the dimer.

It is found in the cytoplasm. The catalysed reaction is tRNA(Ser) + L-serine + ATP = L-seryl-tRNA(Ser) + AMP + diphosphate + H(+). It carries out the reaction tRNA(Sec) + L-serine + ATP = L-seryl-tRNA(Sec) + AMP + diphosphate + H(+). It functions in the pathway aminoacyl-tRNA biosynthesis; selenocysteinyl-tRNA(Sec) biosynthesis; L-seryl-tRNA(Sec) from L-serine and tRNA(Sec): step 1/1. Its function is as follows. Catalyzes the attachment of serine to tRNA(Ser). Is also able to aminoacylate tRNA(Sec) with serine, to form the misacylated tRNA L-seryl-tRNA(Sec), which will be further converted into selenocysteinyl-tRNA(Sec). This is Serine--tRNA ligase from Verminephrobacter eiseniae (strain EF01-2).